A 236-amino-acid polypeptide reads, in one-letter code: Factor V activator RVV-V alpha (236 aa).

Positions 1 to 227 (VVGGDECNIN…YNNWIQNIIA (227 aa)) constitute a Peptidase S1 domain. Disulfide bonds link Cys-7-Cys-141, Cys-28-Cys-44, Cys-76-Cys-234, Cys-120-Cys-188, Cys-152-Cys-167, and Cys-178-Cys-203. Active-site charge relay system residues include His-43 and Asp-88. Ser-182 serves as the catalytic Charge relay system. A glycan (N-linked (GlcNAc...) asparagine) is linked at Asn-229.

Belongs to the peptidase S1 family. Snake venom subfamily. In terms of assembly, monomer. In terms of tissue distribution, expressed by the venom gland.

It localises to the secreted. It catalyses the reaction Fully activates human clotting factor V by a single cleavage at the 1545-Trp-Tyr-Leu-Arg-|-Ser-Asn-Asn-Gly-1552 bond. Cattle, but not rabbit, factor V is cleaved, and no other proteins of the clotting system are attacked. Esterase activity is observed on Bz-Arg-OEt and Tos-Arg-OMe, and amidase activity on Phe-pipecolyl-Arg-NHPhNO2.. Its activity is regulated as follows. Inhibited by D-Phe-Pro-Arg-chloromethyl ketone (FPRCK) (97%), PMSF (76%), and benzamidine (50%). Is not inhibited by BPTI, antithrombin and EDTA. Functionally, venom serine protease that activates factor V (F5) in a calcium-independent manner. It cleaves the Arg(1545)-Ser(1546) linkage in the human factor V molecule. Induces the coagulation of mammalian plasma. The polypeptide is Factor V activator RVV-V alpha (Daboia siamensis (Eastern Russel's viper)).